Consider the following 199-residue polypeptide: Pre-histone-like nucleoprotein (199 aa).

Position 2 is an N-acetylserine; by host (Ser2). Positions 2–23 are excised as a propeptide; that stretch reads SILISPSDNTGWGLGTGKMYGG. Position 26 is an N6-acetyllysine; by host (Lys26). Positions 189–199 match the Nuclear localization signal motif; that stretch reads RRKASVRRRRT.

The protein belongs to the adenoviridae histone-like nucleoprotein family. Interacts with the core-capsid bridging protein; this interaction bridges the virus core to the capsid. Interacts with host NPM1; this interaction might play a role in placing the pre-histone-like nucleoprotein on the viral DNA or regulating viral gene expression. Interacts with host HMGB1; this interaction inhibits host immune response. In terms of processing, cleaved near the N-terminus by the viral protease during virion maturation to form the mature protein.

It localises to the virion. The protein resides in the host nucleus. It is found in the host nucleolus. Functionally, plays a role in the inhibition of host immune response within the nucleus. Interacts with cellular nucleosomes and immobilizes the host immune danger signal HMGB1 on chromatin. In turn, prevents HMGB1 release out of the cell and thus decreases inflammation. Also plays a role in the wrapping and condensation of the viral DNA. May also promote viral genome import into the nucleus. The polypeptide is Pre-histone-like nucleoprotein (Murine adenovirus A serotype 1 (MAdV-1)).